Reading from the N-terminus, the 257-residue chain is Ribonuclease HII (257 aa).

Residues 71-257 enclose the RNase H type-2 domain; the sequence is ELIAGIDEVG…EPIKSMVNFK (187 aa). 3 residues coordinate a divalent metal cation: Asp77, Glu78, and Asp169.

The protein belongs to the RNase HII family. The cofactor is Mn(2+). Requires Mg(2+) as cofactor.

The protein localises to the cytoplasm. It catalyses the reaction Endonucleolytic cleavage to 5'-phosphomonoester.. Its function is as follows. Endonuclease that specifically degrades the RNA of RNA-DNA hybrids. This chain is Ribonuclease HII (rnhB), found in Lactococcus lactis subsp. cremoris (strain MG1363).